A 108-amino-acid polypeptide reads, in one-letter code: C-C motif chemokine 19 (108 aa).

The N-terminal stretch at 1 to 25 is a signal peptide; sequence MAPRVTPLLAFSLLVLWTFPAPTLG. 2 disulfide bridges follow: C33/C59 and C34/C75. The N-linked (GlcNAc...) asparagine glycan is linked to N100.

This sequence belongs to the intercrine beta (chemokine CC) family. In terms of assembly, interacts with TNFAIP6 (via Link domain). In terms of tissue distribution, highly expressed by dendritic cells in mesenteric and peripheral lymph nodes. Significant expression in spleen (T cell zone or periarteriolar lymphatic sheath) and Peyer patches. Low expression in thymus.

Its subcellular location is the secreted. In terms of biological role, strongly chemotactic for naive (L-selectinhi) CD4 T-cells and for CD8 T-cells and weakly attractive for resting B-cells and memory (L-selectinlo) CD4 T-cells. May play a role in promoting encounters between recirculating T-cells and dendritic cells and in the migration of activated B-cells into the T-zone of secondary lymphoid tissues. Binds to chemokine receptor CCR7. Binds to atypical chemokine receptor ACKR4 and mediates the recruitment of beta-arrestin (ARRB1/2) to ACKR4. This chain is C-C motif chemokine 19 (Ccl19), found in Mus musculus (Mouse).